We begin with the raw amino-acid sequence, 402 residues long: GPI mannosyltransferase 1 (402 aa).

10 consecutive transmembrane segments (helical) span residues 5–25 (VILLLTVSLLLRIGFFSYGIF), 79–99 (WIHMGKVFFVLFDLITGVMII), 108–128 (LTKQLILASIWLLNPIVITIS), 162–182 (LSIHFKIYPIIYALPIGIYLL), 191–211 (IWRLFMIGISTLIGITAPTYF), 238–258 (FSIWNLVLLLESAGIHLSQSI), 260–280 (LSKLAFVPQLTLCAVLPYLLW), 309–329 (QYFIWYLVLSPFYFANTTITW), 333–353 (VVCIFLWILSQAVWLSQAYLL), and 365–385 (LFFGNIVFFLINVYLLGVFIT).

This sequence belongs to the PIGM family.

It is found in the endoplasmic reticulum membrane. It functions in the pathway glycolipid biosynthesis; glycosylphosphatidylinositol-anchor biosynthesis. Functionally, mannosyltransferase involved in glycosylphosphatidylinositol-anchor biosynthesis. Transfers the first alpha-1,4-mannose to GlcN-acyl-PI during GPI precursor assembly. Required for cell wall integrity. The polypeptide is GPI mannosyltransferase 1 (GPI14) (Kluyveromyces lactis (strain ATCC 8585 / CBS 2359 / DSM 70799 / NBRC 1267 / NRRL Y-1140 / WM37) (Yeast)).